The following is a 159-amino-acid chain: Immunoglobulin J chain (159 aa).

Residues 1–21 (MKTHLLLWGVLAIFVKAVLVT) form the signal peptide. Intrachain disulfides connect Cys34/Cys123, Cys93/Cys113, and Cys131/Cys156. Residue Asn70 is glycosylated (N-linked (GlcNAc...) (complex) asparagine).

In terms of assembly, part of the secretory IgA (sIgA) complex that consists of two, four or five IgA monomers, and two additional non-Ig polypeptides, namely the JCHAIN and the secretory component (the proteolytic product of PIGR). Part of the secretory IgM (sIgM) complex that consist of five IgM monomers, and two additional non-Ig polypeptides, namely the JCHAIN and the secretory component (the proteolytic product of PIGR). JCHAIN-containing IgM interacts (via CH4 domain) with FCRM (via Ig-like domain).

It is found in the secreted. In terms of biological role, serves to link two monomer units of either IgM or IgA. In the case of IgM, the J chain-joined dimer is a nucleating unit for the IgM pentamer, and in the case of IgA it induces dimers and/or larger polymers. It also helps to bind these immunoglobulins to secretory component. The polypeptide is Immunoglobulin J chain (Mus musculus (Mouse)).